The following is a 37-amino-acid chain: Large ribosomal subunit protein bL36 (37 aa).

The protein belongs to the bacterial ribosomal protein bL36 family.

The protein is Large ribosomal subunit protein bL36 of Trichodesmium erythraeum (strain IMS101).